Reading from the N-terminus, the 161-residue chain is Regulator of ribonuclease activity A (161 aa).

The protein belongs to the RraA family. Homotrimer. Binds to both RNA-binding sites in the C-terminal region of Rne and to RhlB.

The protein localises to the cytoplasm. Globally modulates RNA abundance by binding to RNase E (Rne) and regulating its endonucleolytic activity. Can modulate Rne action in a substrate-dependent manner by altering the composition of the degradosome. Modulates RNA-binding and helicase activities of the degradosome. This is Regulator of ribonuclease activity A from Shewanella oneidensis (strain ATCC 700550 / JCM 31522 / CIP 106686 / LMG 19005 / NCIMB 14063 / MR-1).